Here is a 340-residue protein sequence, read N- to C-terminus: Putative transport protein AF_1800 (340 aa).

The next 7 helical transmembrane spans lie at 7-27 (LVLL…FTPL), 57-77 (SVIA…YGLI), 140-160 (TLLI…LADM), 193-213 (LWFG…PFFL), 225-245 (GLMF…ILPV), 260-280 (FLLI…RPYF), and 290-310 (LVLM…GFFI).

Belongs to the autoinducer-2 exporter (AI-2E) (TC 2.A.86) family.

The protein resides in the cell membrane. The polypeptide is Putative transport protein AF_1800 (Archaeoglobus fulgidus (strain ATCC 49558 / DSM 4304 / JCM 9628 / NBRC 100126 / VC-16)).